Consider the following 375-residue polypeptide: tRNA-specific 2-thiouridylase MnmA 3 (375 aa).

Residues 11-18 (GMSGGIDS) and Met-37 contribute to the ATP site. Catalysis depends on Cys-104, which acts as the Nucleophile. A disulfide bridge links Cys-104 with Cys-201. ATP is bound at residue Gly-128. The segment at 150 to 152 (KDQ) is interaction with tRNA. The Cysteine persulfide intermediate role is filled by Cys-201. The segment at 309–310 (RY) is interaction with tRNA.

The protein belongs to the MnmA/TRMU family.

It is found in the cytoplasm. It carries out the reaction S-sulfanyl-L-cysteinyl-[protein] + uridine(34) in tRNA + AH2 + ATP = 2-thiouridine(34) in tRNA + L-cysteinyl-[protein] + A + AMP + diphosphate + H(+). Its function is as follows. Catalyzes the 2-thiolation of uridine at the wobble position (U34) of tRNA, leading to the formation of s(2)U34. The chain is tRNA-specific 2-thiouridylase MnmA 3 from Phocaeicola vulgatus (strain ATCC 8482 / DSM 1447 / JCM 5826 / CCUG 4940 / NBRC 14291 / NCTC 11154) (Bacteroides vulgatus).